Consider the following 166-residue polypeptide: Phosphopantetheine adenylyltransferase (166 aa).

Position 11 (Ser11) interacts with substrate. ATP is bound by residues 11–12 (SF) and His19. Positions 43, 76, and 90 each coordinate substrate. ATP is bound by residues 91 to 93 (GLR), Glu101, and 126 to 132 (YRYFSSS).

Belongs to the bacterial CoaD family. Homohexamer. It depends on Mg(2+) as a cofactor.

The protein localises to the cytoplasm. It carries out the reaction (R)-4'-phosphopantetheine + ATP + H(+) = 3'-dephospho-CoA + diphosphate. Its pathway is cofactor biosynthesis; coenzyme A biosynthesis; CoA from (R)-pantothenate: step 4/5. Its function is as follows. Reversibly transfers an adenylyl group from ATP to 4'-phosphopantetheine, yielding dephospho-CoA (dPCoA) and pyrophosphate. This chain is Phosphopantetheine adenylyltransferase, found in Streptococcus mutans serotype c (strain ATCC 700610 / UA159).